A 317-amino-acid chain; its full sequence is Serpentine receptor class delta-46 (317 aa).

7 helical membrane-spanning segments follow: residues 9 to 29 (FYII…YVII), 42 to 62 (IFLC…LLQA), 91 to 111 (YVLC…TMYV), 129 to 149 (VIIL…YLTI), 185 to 205 (QIVF…MFCL), 239 to 259 (AFLP…ALIT), and 269 to 289 (FVSV…FYTV).

Belongs to the nematode receptor-like protein srd family.

It is found in the membrane. The sequence is that of Serpentine receptor class delta-46 (srd-46) from Caenorhabditis elegans.